Consider the following 762-residue polypeptide: Pyrophosphate-energized vacuolar membrane proton pump (762 aa).

Residues M1–E6 lie on the Intravacuolar side of the membrane. Residues L7 to K33 form a helical membrane-spanning segment. The Cytoplasmic segment spans residues V34–G81. A helical transmembrane segment spans residues A82–I111. At E112–A131 the chain is on the intravacuolar side. The cysteines at positions 121 and 128 are disulfide-linked. A helical membrane pass occupies residues L132–I159. Residues A160–A182 are Cytoplasmic-facing. Residues F183–Y212 form a helical membrane-spanning segment. The Intravacuolar segment spans residues G213–D215. A helical membrane pass occupies residues W216–Y244. The Cytoplasmic portion of the chain corresponds to T245–G282. K246 contacts substrate. The Mg(2+) site is built by D249, D253, and D279. A helical membrane pass occupies residues D283–I308. At S309–D316 the chain is on the intravacuolar side. Residues F317–T342 form a helical membrane-spanning segment. At D343 to A350 the chain is on the cytoplasmic side. Residues N351–L378 traverse the membrane as a helical segment. The Intravacuolar portion of the chain corresponds to A379–N397. Residues W398–Y421 form a helical membrane-spanning segment. Over T422–N443 the chain is Cytoplasmic. A helical membrane pass occupies residues V444–V468. At S469 to A474 the chain is on the intravacuolar side. Residues M475–I501 traverse the membrane as a helical segment. At S502–N530 the chain is on the cytoplasmic side. Positions 503 and 530 each coordinate Mg(2+). The helical transmembrane segment at T531–A559 threads the bilayer. At G560–P569 the chain is on the intravacuolar side. Residues K570–L598 traverse the membrane as a helical segment. At K599–V627 the chain is on the cytoplasmic side. A helical membrane pass occupies residues K628 to F656. Residue G657 is a topological domain, intravacuolar. A helical membrane pass occupies residues V658–A685. At W686–T728 the chain is on the cytoplasmic side. The Mg(2+) site is built by D687 and D723. K726 is a binding site for substrate. Residues S729–Y754 traverse the membrane as a helical segment. The Intravacuolar portion of the chain corresponds to G755–I762.

This sequence belongs to the H(+)-translocating pyrophosphatase (TC 3.A.10) family. K(+)-stimulated subfamily. Monomer.

It localises to the vacuole membrane. The catalysed reaction is diphosphate + H2O + H(+)(in) = 2 phosphate + 2 H(+)(out). Functionally, contributes to the transtonoplast (from cytosol to vacuole lumen) H(+)-electrochemical potential difference. It establishes a proton gradient of similar and often greater magnitude than the H(+)-ATPase on the same membrane. The sequence is that of Pyrophosphate-energized vacuolar membrane proton pump from Hordeum vulgare (Barley).